Reading from the N-terminus, the 337-residue chain is Putative 4-hydroxythreonine-4-phosphate dehydrogenase (337 aa).

The a divalent metal cation site is built by His-172, His-216, and His-271.

This sequence belongs to the PdxA family. Homodimer. It depends on Zn(2+) as a cofactor. Mg(2+) is required as a cofactor. The cofactor is Co(2+).

The protein localises to the cytoplasm. The catalysed reaction is 4-(phosphooxy)-L-threonine + NAD(+) = 3-amino-2-oxopropyl phosphate + CO2 + NADH. It participates in cofactor biosynthesis; pyridoxine 5'-phosphate biosynthesis; pyridoxine 5'-phosphate from D-erythrose 4-phosphate: step 4/5. Its function is as follows. Catalyzes the NAD(P)-dependent oxidation of 4-(phosphooxy)-L-threonine (HTP) into 2-amino-3-oxo-4-(phosphooxy)butyric acid which spontaneously decarboxylates to form 3-amino-2-oxopropyl phosphate (AHAP). This chain is Putative 4-hydroxythreonine-4-phosphate dehydrogenase, found in Pasteurella multocida (strain Pm70).